Consider the following 261-residue polypeptide: Zinc import ATP-binding protein ZnuC (261 aa).

Residues 6-221 (IRLEKVAVRF…PAFVELFGNN (216 aa)) enclose the ABC transporter domain. 38 to 45 (GPNGAGKT) is a binding site for ATP.

It belongs to the ABC transporter superfamily. Zinc importer (TC 3.A.1.15.5) family. The complex is composed of two ATP-binding proteins (ZnuC), two transmembrane proteins (ZnuB) and a solute-binding protein (ZnuA).

The protein resides in the cell inner membrane. The enzyme catalyses Zn(2+)(out) + ATP(in) + H2O(in) = Zn(2+)(in) + ADP(in) + phosphate(in) + H(+)(in). Its function is as follows. Part of the ABC transporter complex ZnuABC involved in zinc import. Responsible for energy coupling to the transport system. The polypeptide is Zinc import ATP-binding protein ZnuC (Pseudomonas fluorescens (strain Pf0-1)).